Here is a 364-residue protein sequence, read N- to C-terminus: DNA polymerase IV (364 aa).

Residues 14–198 (IIHIDMDAFF…LPIEKFHGVG (185 aa)) enclose the UmuC domain. The Mg(2+) site is built by D18 and D116. The active site involves E117.

Belongs to the DNA polymerase type-Y family. As to quaternary structure, monomer. It depends on Mg(2+) as a cofactor.

The protein resides in the cytoplasm. The catalysed reaction is DNA(n) + a 2'-deoxyribonucleoside 5'-triphosphate = DNA(n+1) + diphosphate. Its function is as follows. Poorly processive, error-prone DNA polymerase involved in untargeted mutagenesis. Copies undamaged DNA at stalled replication forks, which arise in vivo from mismatched or misaligned primer ends. These misaligned primers can be extended by PolIV. Exhibits no 3'-5' exonuclease (proofreading) activity. May be involved in translesional synthesis, in conjunction with the beta clamp from PolIII. This Streptococcus pyogenes serotype M2 (strain MGAS10270) protein is DNA polymerase IV.